The chain runs to 362 residues: Ferrochelatase (362 aa).

Fe cation-binding residues include H228 and E309.

The protein belongs to the ferrochelatase family.

Its subcellular location is the cytoplasm. The catalysed reaction is heme b + 2 H(+) = protoporphyrin IX + Fe(2+). The protein operates within porphyrin-containing compound metabolism; protoheme biosynthesis; protoheme from protoporphyrin-IX: step 1/1. Its function is as follows. Catalyzes the ferrous insertion into protoporphyrin IX. In Bordetella parapertussis (strain 12822 / ATCC BAA-587 / NCTC 13253), this protein is Ferrochelatase.